The chain runs to 150 residues: Transcriptional regulator MraZ (150 aa).

2 consecutive SpoVT-AbrB domains span residues 7-58 and 87-130; these read KEQH…EPEI and LDSV…SPEK.

This sequence belongs to the MraZ family. In terms of assembly, forms oligomers.

The protein resides in the cytoplasm. The protein localises to the nucleoid. In Chlorobium phaeobacteroides (strain BS1), this protein is Transcriptional regulator MraZ.